The primary structure comprises 199 residues: ATP synthase subunit a (199 aa).

6 consecutive transmembrane segments (helical) span residues 2-22 (TNVY…LFYF), 25-45 (SMLG…FSYT), 53-73 (VISV…YFMY), 80-100 (MIEF…LTFI), 143-163 (VNVL…ELYL), and 164-184 (GIFY…VFFI).

It belongs to the ATPase A chain family. F-type ATPases have 2 components, CF(1) - the catalytic core - and CF(0) - the membrane proton channel. CF(1) has five subunits: alpha(3), beta(3), gamma(1), delta(1), epsilon(1). CF(0) has three main subunits: a, b and c.

The protein resides in the mitochondrion inner membrane. In terms of biological role, mitochondrial membrane ATP synthase (F(1)F(0) ATP synthase or Complex V) produces ATP from ADP in the presence of a proton gradient across the membrane which is generated by electron transport complexes of the respiratory chain. F-type ATPases consist of two structural domains, F(1) - containing the extramembraneous catalytic core and F(0) - containing the membrane proton channel, linked together by a central stalk and a peripheral stalk. During catalysis, ATP synthesis in the catalytic domain of F(1) is coupled via a rotary mechanism of the central stalk subunits to proton translocation. Key component of the proton channel; it may play a direct role in the translocation of protons across the membrane. The sequence is that of ATP synthase subunit a (ATP6) from Ascaris suum (Pig roundworm).